The primary structure comprises 330 residues: D-alanine--D-alanine ligase (330 aa).

One can recognise an ATP-grasp domain in the interval 121–321 (NHYLKDFGVK…IKDVMTDIIE (201 aa)). 149–204 (VTRLGLPIFVKPNDGGSSFGVTKVKEVSAIQPAIAKAFGEGREVILERFIDGTEVT) contacts ATP. Residues Asp275, Glu288, and Asn290 each contribute to the Mg(2+) site.

It belongs to the D-alanine--D-alanine ligase family. Requires Mg(2+) as cofactor. Mn(2+) serves as cofactor.

It localises to the cytoplasm. It carries out the reaction 2 D-alanine + ATP = D-alanyl-D-alanine + ADP + phosphate + H(+). Its pathway is cell wall biogenesis; peptidoglycan biosynthesis. Its function is as follows. Cell wall formation. In Parabacteroides distasonis (strain ATCC 8503 / DSM 20701 / CIP 104284 / JCM 5825 / NCTC 11152), this protein is D-alanine--D-alanine ligase.